Consider the following 192-residue polypeptide: uncharacterized protein (192 aa).

Positions 29 to 160 (QRQAAVLVPI…PLDIHRRGND (132 aa)) constitute a Nudix hydrolase domain. Residues 67–89 (GAVDNTDATLIAAALREAQEEVA) carry the Nudix box motif. Mg(2+) is bound by residues E83 and E87.

It belongs to the Nudix hydrolase family. PCD1 subfamily. Mn(2+) serves as cofactor. It depends on Mg(2+) as a cofactor.

In terms of biological role, probably mediates the hydrolysis of some nucleoside diphosphate derivatives. This is an uncharacterized protein from Klebsiella pneumoniae subsp. pneumoniae (strain ATCC 700721 / MGH 78578).